Reading from the N-terminus, the 156-residue chain is Small ribosomal subunit protein uS7 (156 aa).

It belongs to the universal ribosomal protein uS7 family. Part of the 30S ribosomal subunit. Contacts proteins S9 and S11.

One of the primary rRNA binding proteins, it binds directly to 16S rRNA where it nucleates assembly of the head domain of the 30S subunit. Is located at the subunit interface close to the decoding center, probably blocks exit of the E-site tRNA. This chain is Small ribosomal subunit protein uS7, found in Pediococcus pentosaceus (strain ATCC 25745 / CCUG 21536 / LMG 10740 / 183-1w).